The sequence spans 152 residues: MSVAASFPKHTSFTMRASFAAADGLPETENNAGEPENTYILRPVFQQRFRPSVVKDCIHAVLKEELANAEYSPEEMPQLTKHLSENIKDKLKEMGFDRYKMVVQVVIGEQRGEGVFMAARCFWDADTDNCTHDVFMNDSLFCVVAAFGCFYY.

This sequence belongs to the dynein light chain Tctex-type family. In terms of assembly, light chain of the cytoplasmic dynein complex 2, a multisubunit complex composed at least of eleven different proteins. The cytoplasmic dynein 2 complex consists of two catalytic heavy chains (HCs) and a number of non-catalytic subunits presented by intermediate chains (ICs), light intermediate chains (LICs) and light chains (LCs). Among them, a heavy chain (DYNC2H1), two intermediate chains (DYNC2I2 and DYNC2I1), a light intermediate chain (DYNC2LI1), and a light chain (DYNLT2B) are unique to the dynein-2 complex, but a subset of the light chains are also shared by dynein-1 and dynein-2 complexes. The dimer DYNLT2B-DYNLT1/DYNLT3 interacts with DYNC2I1; this interaction is crucial for retrograde trafficking of ciliary proteins.

Its subcellular location is the dynein axonemal particle. Its function is as follows. Acts as one of several non-catalytic accessory components of the cytoplasmic dynein 2 complex (dynein-2 complex), a motor protein complex that drives the movement of cargos along microtubules within cilia and flagella in concert with the intraflagellar transport (IFT) system. Required for proper retrograde ciliary transport. The chain is Dynein light chain Tctex-type protein 2B (DYNLT2B) from Bos taurus (Bovine).